A 247-amino-acid chain; its full sequence is Pyridoxine 5'-phosphate synthase (247 aa).

Asn-9 is a 3-amino-2-oxopropyl phosphate binding site. 11-12 provides a ligand contact to 1-deoxy-D-xylulose 5-phosphate; sequence DH. Arg-20 is a binding site for 3-amino-2-oxopropyl phosphate. Catalysis depends on His-45, which acts as the Proton acceptor. Arg-47 and His-52 together coordinate 1-deoxy-D-xylulose 5-phosphate. Glu-72 acts as the Proton acceptor in catalysis. Thr-102 contributes to the 1-deoxy-D-xylulose 5-phosphate binding site. Catalysis depends on His-193, which acts as the Proton donor. Residues Gly-194 and 215–216 contribute to the 3-amino-2-oxopropyl phosphate site; that span reads GH.

It belongs to the PNP synthase family. As to quaternary structure, homooctamer; tetramer of dimers.

It is found in the cytoplasm. It catalyses the reaction 3-amino-2-oxopropyl phosphate + 1-deoxy-D-xylulose 5-phosphate = pyridoxine 5'-phosphate + phosphate + 2 H2O + H(+). Its pathway is cofactor biosynthesis; pyridoxine 5'-phosphate biosynthesis; pyridoxine 5'-phosphate from D-erythrose 4-phosphate: step 5/5. In terms of biological role, catalyzes the complicated ring closure reaction between the two acyclic compounds 1-deoxy-D-xylulose-5-phosphate (DXP) and 3-amino-2-oxopropyl phosphate (1-amino-acetone-3-phosphate or AAP) to form pyridoxine 5'-phosphate (PNP) and inorganic phosphate. The sequence is that of Pyridoxine 5'-phosphate synthase from Blochmanniella floridana.